A 407-amino-acid polypeptide reads, in one-letter code: Phosphoglycerate kinase (407 aa).

Substrate is bound by residues 27–29 (DLN), Arg-43, 66–69 (HLGR), Arg-125, and Arg-165. ATP-binding positions include Lys-215, Gly-303, Glu-334, and 363 to 366 (GGDS).

Belongs to the phosphoglycerate kinase family. In terms of assembly, monomer.

The protein resides in the cytoplasm. It carries out the reaction (2R)-3-phosphoglycerate + ATP = (2R)-3-phospho-glyceroyl phosphate + ADP. Its pathway is carbohydrate degradation; glycolysis; pyruvate from D-glyceraldehyde 3-phosphate: step 2/5. This is Phosphoglycerate kinase from Mycobacterium sp. (strain JLS).